The chain runs to 691 residues: Inactive TPR repeat-containing thioredoxin TTL3 (691 aa).

Disordered regions lie at residues 1–153 (MSHS…AVSP) and 174–209 (MASRTSSRTETLCTGTGNYGHGNVVRSGGGGGTSGK). Serine 8 carries the phosphoserine modification. A compositionally biased stretch (basic and acidic residues) spans 19 to 39 (RFRDLQRNDDDVNKPDFRELD). 2 positions are modified to phosphoserine: serine 42 and serine 45. Low complexity predominate over residues 51–79 (GSASSSAAATPTSSSGSSGSASGKPSVSS). A compositionally biased stretch (basic and acidic residues) spans 83-93 (KRLDDAYKSHS). Polar residues-rich tracts occupy residues 94 to 108 (GELSSPGSGMPTTTR), 118 to 140 (SSTGTPLIFSGSSFTSATSHTSP), and 175 to 189 (ASRTSSRTETLCTGT). 8 TPR repeats span residues 220–253 (PEELKRMGNDMYRRGSFSEALSLYDRAILISPGN), 255–287 (AYRSNRAAALTALRRLGEAVKECLEAVRIDPSY), 289–321 (RAHQRLASLYLRLGEAENARRHICFSGQCPDQA), 327–362 (QTLEKHLRRCWEARKIGDWKTAIKETDAAIANGADS), 412–445 (AYVLCIQAQVDMALGRFENAVVKAERAAMLDQTN), 458–491 (VVRARTRGNELFSSGRFSEACVAYGDGLKQDDSN), 492–525 (SVLYCNRAACWYKLGLWEKSVEDCNHALKSQPSY), and 527–559 (KALLRRAASYGKLGRWEDAVKDYEFLRRELPGD). The region spanning 596–683 (DKFKKSVALP…MVCPSHQFLE (88 aa)) is the Thioredoxin domain.

As to quaternary structure, interacts with BRL2. In terms of tissue distribution, expressed in embryos and organ primordia in shoot and root. In primary and cauline leaves and petals, is expressed in hydathodes, guard cells, petiole cells and cells associated with differentiating vascular bundles.

Involved in osmotic and salt stress tolerance. May play a role in the control of meristematic cell size during osmotic stress. May function as an adapter protein for BRL2 and may be required for signaling affecting leaf vascular tissue pattern formation. This is Inactive TPR repeat-containing thioredoxin TTL3 from Arabidopsis thaliana (Mouse-ear cress).